The chain runs to 156 residues: Transcriptional repressor NrdR (156 aa).

The segment at 3–34 (CPKCNSTQSKVVDSRHADELNAIRRRRECENC) is a zinc-finger region. The 91-residue stretch at 49–139 (LIVVKKDGTR…VYKEFKDVDQ (91 aa)) folds into the ATP-cone domain.

The protein belongs to the NrdR family. It depends on Zn(2+) as a cofactor.

Functionally, negatively regulates transcription of bacterial ribonucleotide reductase nrd genes and operons by binding to NrdR-boxes. This chain is Transcriptional repressor NrdR, found in Staphylococcus aureus (strain NCTC 8325 / PS 47).